Here is a 206-residue protein sequence, read N- to C-terminus: Small ribosomal subunit protein uS4 (206 aa).

Residues 96–156 (GRLDNVVYRM…EKAKKQSRVK (61 aa)) form the S4 RNA-binding domain.

It belongs to the universal ribosomal protein uS4 family. Part of the 30S ribosomal subunit. Contacts protein S5. The interaction surface between S4 and S5 is involved in control of translational fidelity.

Functionally, one of the primary rRNA binding proteins, it binds directly to 16S rRNA where it nucleates assembly of the body of the 30S subunit. With S5 and S12 plays an important role in translational accuracy. This Klebsiella pneumoniae (strain 342) protein is Small ribosomal subunit protein uS4.